The sequence spans 273 residues: Rhamnulose-1-phosphate aldolase (273 aa).

Glu-117 is a catalytic residue. Zn(2+)-binding residues include His-140, His-142, and His-211.

It belongs to the aldolase class II family. RhaD subfamily. Zn(2+) is required as a cofactor.

Its subcellular location is the cytoplasm. It carries out the reaction L-rhamnulose 1-phosphate = (S)-lactaldehyde + dihydroxyacetone phosphate. It participates in carbohydrate degradation; L-rhamnose degradation; glycerone phosphate from L-rhamnose: step 3/3. Catalyzes the reversible cleavage of L-rhamnulose-1-phosphate to dihydroxyacetone phosphate (DHAP) and L-lactaldehyde. The chain is Rhamnulose-1-phosphate aldolase from Listeria monocytogenes serotype 4b (strain CLIP80459).